Consider the following 313-residue polypeptide: Porphobilinogen deaminase (313 aa).

Cys242 bears the S-(dipyrrolylmethanemethyl)cysteine mark.

The protein belongs to the HMBS family. As to quaternary structure, monomer. Requires dipyrromethane as cofactor.

It carries out the reaction 4 porphobilinogen + H2O = hydroxymethylbilane + 4 NH4(+). Its pathway is porphyrin-containing compound metabolism; protoporphyrin-IX biosynthesis; coproporphyrinogen-III from 5-aminolevulinate: step 2/4. Functionally, tetrapolymerization of the monopyrrole PBG into the hydroxymethylbilane pre-uroporphyrinogen in several discrete steps. The polypeptide is Porphobilinogen deaminase (hemC) (Proteus mirabilis).